We begin with the raw amino-acid sequence, 282 residues long: Pantothenate synthetase (282 aa).

Met-30–His-37 is an ATP binding site. The active-site Proton donor is His-37. Gln-61 lines the (R)-pantoate pocket. Position 61 (Gln-61) interacts with beta-alanine. Gly-147–Asp-150 is a binding site for ATP. (R)-pantoate is bound at residue Gln-153. ATP-binding positions include Val-176 and Lys-184–Arg-187.

It belongs to the pantothenate synthetase family. Homodimer.

The protein resides in the cytoplasm. It catalyses the reaction (R)-pantoate + beta-alanine + ATP = (R)-pantothenate + AMP + diphosphate + H(+). It functions in the pathway cofactor biosynthesis; (R)-pantothenate biosynthesis; (R)-pantothenate from (R)-pantoate and beta-alanine: step 1/1. Its function is as follows. Catalyzes the condensation of pantoate with beta-alanine in an ATP-dependent reaction via a pantoyl-adenylate intermediate. The sequence is that of Pantothenate synthetase from Bacillus cereus (strain AH187).